We begin with the raw amino-acid sequence, 229 residues long: UPF0758 protein CA_C1241 (229 aa).

Residues 107–229 (KITSPKEAAN…YISLKEEGLL (123 aa)) enclose the MPN domain. 3 residues coordinate Zn(2+): His-178, His-180, and Asp-191. The short motif at 178 to 191 (HNHPSGDPKPSNED) is the JAMM motif element.

The protein belongs to the UPF0758 family.

The chain is UPF0758 protein CA_C1241 from Clostridium acetobutylicum (strain ATCC 824 / DSM 792 / JCM 1419 / IAM 19013 / LMG 5710 / NBRC 13948 / NRRL B-527 / VKM B-1787 / 2291 / W).